Reading from the N-terminus, the 894-residue chain is Myb-like protein K (894 aa).

The segment covering 93–139 (LQQQQQSPVTNVATNTPPTLQHSISSPSPNNFNNNNNANNQFLSPNS) has biased composition (low complexity). Disordered regions lie at residues 93–221 (LQQQ…SASS), 299–353 (QVGN…QPIT), 492–539 (QQQQ…LEMI), and 601–659 (AATT…HWTS). Residues 140 to 149 (PQVAKSSPSQ) show a composition bias toward polar residues. The span at 150 to 221 (NNPSTPIANT…SQSLNSSASS (72 aa)) shows a compositional bias: low complexity. A compositionally biased stretch (polar residues) spans 300 to 309 (VGNPMQQSND). Low complexity-rich tracts occupy residues 310–353 (MQPQ…QPIT) and 492–527 (QQQQ…PQQM). Basic and acidic residues-rich tracts occupy residues 611 to 640 (GKEE…SKKD) and 649 to 659 (ASKEKTSHWTS). The HTH myb-type domain maps to 649–704 (ASKEKTSHWTSEEHNKFLEAVQQFGIKDYHAIAKFVQTRNHHQVRTHVNTYLKNQK). The H-T-H motif DNA-binding region spans 677-700 (YHAIAKFVQTRNHHQVRTHVNTYL). Residues 703-852 (QKKAEAATSS…EYNSGFDSNS (150 aa)) form a disordered region. Composition is skewed to low complexity over residues 710-742 (TSST…QPPI), 751-805 (QQQQ…QQPQ), and 815-845 (PPNN…NEYN).

The protein localises to the nucleus. The sequence is that of Myb-like protein K (mybK) from Dictyostelium discoideum (Social amoeba).